Here is a 109-residue protein sequence, read N- to C-terminus: Prefoldin subunit 1 (109 aa).

The residue at position 2 (serine 2) is an N-acetylserine.

It belongs to the prefoldin subunit beta family. In terms of assembly, heterohexamer of two PFD-alpha type and four PFD-beta type subunits.

The protein localises to the cytoplasm. Its function is as follows. Binds specifically to cytosolic chaperonin (c-CPN) and transfers target proteins to it. Binds to nascent polypeptide chain and promotes folding in an environment in which there are many competing pathways for nonnative proteins. The protein is Prefoldin subunit 1 (PFD1) of Saccharomyces cerevisiae (strain ATCC 204508 / S288c) (Baker's yeast).